Here is a 282-residue protein sequence, read N- to C-terminus: D-alanine aminotransferase (282 aa).

Position 32 (Tyr-32) interacts with substrate. Arg-51 contributes to the pyridoxal 5'-phosphate binding site. Arg-99 and His-101 together coordinate substrate. Catalysis depends on Lys-146, which acts as the Proton acceptor. At Lys-146 the chain carries N6-(pyridoxal phosphate)lysine. A pyridoxal 5'-phosphate-binding site is contributed by Glu-178.

It belongs to the class-IV pyridoxal-phosphate-dependent aminotransferase family. As to quaternary structure, homodimer. Requires pyridoxal 5'-phosphate as cofactor.

It catalyses the reaction D-alanine + 2-oxoglutarate = D-glutamate + pyruvate. Its function is as follows. Acts on the D-isomers of alanine, leucine, aspartate, glutamate, aminobutyrate, norvaline and asparagine. The enzyme transfers an amino group from a substrate D-amino acid to the pyridoxal phosphate cofactor to form pyridoxamine and an alpha-keto acid in the first half-reaction. The second half-reaction is the reverse of the first, transferring the amino group from the pyridoxamine to a second alpha-keto acid to form the product D-amino acid via a ping-pong mechanism. This is an important process in the formation of D-alanine and D-glutamate, which are essential bacterial cell wall components. The protein is D-alanine aminotransferase (dat) of Staphylococcus haemolyticus.